The chain runs to 200 residues: Protein RISC-INTERACTING CLEARING 3'-5' EXORIBONUCLEASE 1 (200 aa).

Oligomerization regions lie at residues 35–66 (SKILEDSVWNGNRSIVFDVYWDVKSVSTKSEW), 102–127 (KFVTFVGVQIQEDLALLKENHGIVIR), and 166–173 (DSIQSKWD).

This sequence belongs to the RICE family. Homohexamer with DnaQ-like exonuclease fold in a ring-shaped structure with a central cavity. Component of AGO1 and AGO10-centered RNA-induced silencing complexes (RISC). Interacts with and acts as a cofactor of AGO1 and AGO10. In terms of tissue distribution, ubiquitously expressed throughout development in germinating seeds, cotyledons, leaves and roots of young seedlings and adult plants, stems and inflorescence.

Its subcellular location is the cytoplasm. The enzyme catalyses Exonucleolytic cleavage in the 3'- to 5'-direction to yield nucleoside 5'-phosphates.. 3'-to-5' exoribonuclease (RNase) specifically targeting single-stranded RNAs. Triggers miRNA accumulation in RNA-induced silencing complex (RISC), composed of miRNAs and AGO proteins, by degrading uridylated cleavage fragments. Required during plant growth and development. The protein is Protein RISC-INTERACTING CLEARING 3'-5' EXORIBONUCLEASE 1 of Arabidopsis thaliana (Mouse-ear cress).